Reading from the N-terminus, the 892-residue chain is Alpha-actinin-1 (892 aa).

Residue Met-1 is modified to N-acetylmethionine. An actin-binding region spans residues 1-247 (MDHYDSQQTN…IMTYVSSFYH (247 aa)). Residue Ser-6 is modified to Phosphoserine. Residue Tyr-12 is modified to Phosphotyrosine; by FAK1. Calponin-homology (CH) domains follow at residues 31–135 (KQQR…LRFA) and 144–250 (TSAK…HAFS). Residues Lys-95 and Lys-195 each carry the N6-acetyllysine modification. Spectrin repeat units follow at residues 274 to 384 (QLME…WLLN), 394 to 499 (HLAE…ALER), 509 to 620 (QLYL…ALTE), and 630 to 733 (RLRK…EVEN). Residues 274–733 (QLMEDYEKLA…IARTINEVEN (460 aa)) are interaction with DDN. Ser-471 bears the Phosphoserine mark. The residue at position 676 (Lys-676) is an N6-acetyllysine. Ser-677 is subject to Phosphoserine. EF-hand domains lie at 746–781 (EQMNEFRASFNHFDRDHSGTLGPEEFKACLISLGYD) and 787–822 (QGEAEFARIMSIVDPNRLGVVTFQAFIDFMSRETAD). 5 residues coordinate Ca(2+): Asp-759, Asp-761, Ser-763, Thr-765, and Glu-770. At Ser-890 the chain carries Phosphoserine.

Belongs to the alpha-actinin family. Homodimer; antiparallel. Interacts with MYOZ2, TTID and LPP. Interacts with DDN. Interacts with PSD. Interacts with MICALL2. Interacts with DNM2 and CTTN. Interacts with PDLIM1. Interacts with PDLIM2. Interacts with PDLIM4 (via PDZ domain). Interacts with IGSF8.

The protein resides in the cytoplasm. It is found in the cytoskeleton. The protein localises to the myofibril. It localises to the sarcomere. Its subcellular location is the z line. The protein resides in the cell membrane. It is found in the cell junction. The protein localises to the cell projection. It localises to the ruffle. Its function is as follows. F-actin cross-linking protein which is thought to anchor actin to a variety of intracellular structures. Association with IGSF8 regulates the immune synapse formation and is required for efficient T-cell activation. This Homo sapiens (Human) protein is Alpha-actinin-1 (ACTN1).